A 641-amino-acid polypeptide reads, in one-letter code: Bifunctional protein glk (641 aa).

Residues 1-340 (MSTGAQTKAA…QLSNRTGGAS (340 aa)) are glucokinase. 23–28 (ADVGGT) provides a ligand contact to ATP. The HTH rpiR-type domain occupies 341–417 (SAVFERIRQM…LKLATGLTGT (77 aa)). Residues 341-641 (SAVFERIRQM…SHGAAPAAKD (301 aa)) form a putative HTH-type transcriptional regulator region. Positions 377 to 396 (IVNIARKADVSQPTVIRFCR) form a DNA-binding region, H-T-H motif. Residues 461–600 (AIDILNNARR…AVGVAIRRAA (140 aa)) enclose the SIS domain. The helical transmembrane segment at 576 to 596 (SMISRILHLVMIDILAVGVAI) threads the bilayer.

In the N-terminal section; belongs to the bacterial glucokinase family.

It localises to the membrane. It carries out the reaction D-glucose + ATP = D-glucose 6-phosphate + ADP + H(+). The chain is Bifunctional protein glk (glk) from Burkholderia mallei (strain ATCC 23344).